The primary structure comprises 33 residues: Alpha-amanitin proprotein 2 (33 aa).

Residues 1–10 (MSDINATRLP) constitute a propeptide that is removed on maturation. I11 carries the (3R,4R)-4,5-dihydroxyisoleucine; in form alpha-amanitin modification. At I11 the chain carries (3R,4S)-4-hydroxyisoleucine; in form gamma-amanitin. A cross-link (cyclopeptide (Ile-Pro)) is located at residues 11–18 (IWGIGCNP). Residues 12–16 (WGIGC) constitute a cross-link (2'-cysteinyl-6'-hydroxytryptophan sulfoxide (Trp-Cys)). A 4-hydroxyproline modification is found at P18. Positions 19-33 (CVGDDVTSVLTRGEA) are excised as a propeptide.

Belongs to the MSDIN fungal toxin family. In terms of processing, processed by the macrocyclase-peptidase enzyme POPB to yield a toxic cyclic octapeptide. POPB first removes 10 residues from the N-terminus. Conformational trapping of the remaining peptide forces the enzyme to release this intermediate rather than proceed to macrocyclization. The enzyme rebinds the remaining peptide in a different conformation and catalyzes macrocyclization of the N-terminal 8 residues. Expressed in basidiocarps.

Its function is as follows. Major toxin belonging to the bicyclic octapeptides amatoxins that acts by binding non-competitively to RNA polymerase II and greatly slowing the elongation of transcripts from target promoters. This chain is Alpha-amanitin proprotein 2, found in Amanita exitialis (Guangzhou destroying angel).